Reading from the N-terminus, the 656-residue chain is UvrABC system protein C (656 aa).

A GIY-YIG domain is found at 16-95 (TDPGVYRFRD…IKEYSPRFNV (80 aa)). The UVR domain maps to 208–243 (GRFLRQLEAEMKQAAAAQEYERAARIRDDIQALRTV).

This sequence belongs to the UvrC family. In terms of assembly, interacts with UvrB in an incision complex.

It localises to the cytoplasm. Its function is as follows. The UvrABC repair system catalyzes the recognition and processing of DNA lesions. UvrC both incises the 5' and 3' sides of the lesion. The N-terminal half is responsible for the 3' incision and the C-terminal half is responsible for the 5' incision. This chain is UvrABC system protein C, found in Thermobifida fusca (strain YX).